The primary structure comprises 456 residues: Solute carrier family 49 member 4 homolog (456 aa).

The Cytoplasmic portion of the chain corresponds to 1–29 (MGLEWSSPGERQPLLFPGGPRSPRVFGRR). The Di-leucine motif; mediates lysosomal localization signature appears at 14 to 15 (LL). A helical membrane pass occupies residues 30–50 (WLVLLLFSVLAFLQGLVWNSW). Residues 51-67 (GPIQISARTAYKFSGLD) lie on the Lumenal side of the membrane. The helical transmembrane segment at 68–88 (IALLVLWGPIGFLPCFLFMWL) threads the bilayer. At 89–95 (MDNRGLR) the chain is on the cytoplasmic side. A helical transmembrane segment spans residues 96–116 (ITVLLTALLMVLGAGLRCVPV). At 117–123 (EDLAIRR) the chain is on the lumenal side. The helical transmembrane segment at 124-144 (ILIHGGQLLNGFAGPTVMNAA) threads the bilayer. Topologically, residues 145 to 162 (PFLSTTWFAPDERATATA) are cytoplasmic. The chain crosses the membrane as a helical span at residues 163 to 183 (IASMLNYLGGACAFLVGPLVV). The Lumenal portion of the chain corresponds to 184–207 (PAPNSTSGLLLYSGSTDAIKDRIE). Asn187 is a glycosylation site (N-linked (GlcNAc...) asparagine). A helical transmembrane segment spans residues 208–228 (AVMYAEFGIIFVVFAAILAYF). Over 229-259 (PARPPVPPSVAAASRRLSYRTSIFRLLSNLR) the chain is Cytoplasmic. The helical transmembrane segment at 260–280 (FLLIVLAYAIPLGFYSGWIGV) threads the bilayer. At 281–292 (LDLILTPVHVTQ) the chain is on the lumenal side. Residues 293-313 (VDAGWVGFWSIVGGCVVGIAV) form a helical membrane-spanning segment. Topologically, residues 314–326 (GRFADSIRGVLKP) are cytoplasmic. Residues 327–347 (ILLLLFSGATLSATWFTLTFL) traverse the membrane as a helical segment. Residues 348–362 (SNVTHLPLTTATLYT) are Lumenal-facing. The N-linked (GlcNAc...) asparagine glycan is linked to Asn349. The helical transmembrane segment at 363-383 (SCILIGVFLNGTVPIFFELFV) threads the bilayer. Topologically, residues 384–392 (ETVYPIPEG) are cytoplasmic. The helical transmembrane segment at 393 to 413 (IACGVVTFLSNIFMGVLLVFL) threads the bilayer. Residues 414 to 420 (TMYQMEL) lie on the Lumenal side of the membrane. The helical transmembrane segment at 421–441 (SWLNWCLTGSCFLSLFFIACF) threads the bilayer. Residues 442 to 456 (RESYDRLYLDVFVSV) lie on the Cytoplasmic side of the membrane.

This sequence belongs to the major facilitator superfamily.

The protein localises to the lysosome membrane. It carries out the reaction pyridoxine(out) + n H(+)(out) = pyridoxine(in) + n H(+)(in). Its function is as follows. Mediates H(+)-dependent pyridoxine transport. This chain is Solute carrier family 49 member 4 homolog (slc49a4), found in Xenopus laevis (African clawed frog).